A 416-amino-acid chain; its full sequence is Peptide chain release factor subunit 1 (416 aa).

The protein belongs to the eukaryotic release factor 1 family. In terms of assembly, heterodimer of two subunits, one of which binds GTP.

The protein resides in the cytoplasm. Functionally, directs the termination of nascent peptide synthesis (translation) in response to the termination codons UAA, UAG and UGA. The sequence is that of Peptide chain release factor subunit 1 from Halorubrum lacusprofundi (strain ATCC 49239 / DSM 5036 / JCM 8891 / ACAM 34).